Here is a 923-residue protein sequence, read N- to C-terminus: Alanine--tRNA ligase (923 aa).

Residues H614, H618, C717, and H721 each coordinate Zn(2+). Positions K884 to A903 are disordered. The segment covering V885–P901 has biased composition (gly residues).

This sequence belongs to the class-II aminoacyl-tRNA synthetase family. It depends on Zn(2+) as a cofactor.

It localises to the cytoplasm. It carries out the reaction tRNA(Ala) + L-alanine + ATP = L-alanyl-tRNA(Ala) + AMP + diphosphate. Catalyzes the attachment of alanine to tRNA(Ala) in a two-step reaction: alanine is first activated by ATP to form Ala-AMP and then transferred to the acceptor end of tRNA(Ala). Also edits incorrectly charged Ser-tRNA(Ala) and Gly-tRNA(Ala) via its editing domain. In Haloquadratum walsbyi (strain DSM 16790 / HBSQ001), this protein is Alanine--tRNA ligase.